Reading from the N-terminus, the 500-residue chain is Beta-xylosidase (500 aa).

The active-site Proton donor is the Glu160. Residue Glu277 is the Nucleophile of the active site.

The protein belongs to the glycosyl hydrolase 39 family.

The catalysed reaction is Hydrolysis of (1-&gt;4)-beta-D-xylans, to remove successive D-xylose residues from the non-reducing termini.. In Thermoanaerobacterium saccharolyticum (strain DSM 8691 / JW/SL-YS485), this protein is Beta-xylosidase (xynB).